Here is a 268-residue protein sequence, read N- to C-terminus: Pantothenate synthetase (268 aa).

18–25 contacts ATP; it reads MGYLHEGH. The active-site Proton donor is the histidine 25. Residue glutamine 49 participates in (R)-pantoate binding. Glutamine 49 is a binding site for beta-alanine. 135–138 is a binding site for ATP; it reads GQKD. Glutamine 141 is a binding site for (R)-pantoate. Residues valine 164 and 172-175 each bind ATP; that span reads LSSR.

This sequence belongs to the pantothenate synthetase family. As to quaternary structure, homodimer.

The protein resides in the cytoplasm. The catalysed reaction is (R)-pantoate + beta-alanine + ATP = (R)-pantothenate + AMP + diphosphate + H(+). Its pathway is cofactor biosynthesis; (R)-pantothenate biosynthesis; (R)-pantothenate from (R)-pantoate and beta-alanine: step 1/1. In terms of biological role, catalyzes the condensation of pantoate with beta-alanine in an ATP-dependent reaction via a pantoyl-adenylate intermediate. The polypeptide is Pantothenate synthetase (Dehalococcoides mccartyi (strain ATCC BAA-2266 / KCTC 15142 / 195) (Dehalococcoides ethenogenes (strain 195))).